We begin with the raw amino-acid sequence, 551 residues long: DNA double-strand break repair helicase HerA (551 aa).

ATP contacts are provided by residues arginine 152, 161 to 166 (GAGKSN), and 507 to 508 (RI).

The protein belongs to the HerA family. In terms of assembly, homohexamer. Interacts with NurA.

The enzyme catalyses Couples ATP hydrolysis with the unwinding of duplex DNA at the replication fork by translocating in the 5'-3' direction. This creates two antiparallel DNA single strands (ssDNA). The leading ssDNA polymer is the template for DNA polymerase III holoenzyme which synthesizes a continuous strand.. It catalyses the reaction ATP + H2O = ADP + phosphate + H(+). The catalysed reaction is Couples ATP hydrolysis with the unwinding of duplex DNA by translocating in the 3'-5' direction.. Helicase activity is stimulated in the presence of NurA. Its function is as follows. Involved in DNA double-strand break (DSB) repair. Probably acts with NurA to stimulate resection of the 5' strand and produce the long 3' single-strand that is required for RadA loading. Has DNA-dependent ATPase activity and DNA helicase activity. The protein is DNA double-strand break repair helicase HerA of Pyrococcus furiosus (strain ATCC 43587 / DSM 3638 / JCM 8422 / Vc1).